Here is a 300-residue protein sequence, read N- to C-terminus: N-acetylmannosamine kinase (300 aa).

Residues 5–12 (ALDIGGTK) and 132–139 (GVGGGIVL) contribute to the ATP site. His-156, Cys-166, Cys-168, and Cys-173 together coordinate Zn(2+).

Belongs to the ROK (NagC/XylR) family. NanK subfamily. Homodimer.

It catalyses the reaction an N-acyl-D-mannosamine + ATP = an N-acyl-D-mannosamine 6-phosphate + ADP + H(+). It functions in the pathway amino-sugar metabolism; N-acetylneuraminate degradation; D-fructose 6-phosphate from N-acetylneuraminate: step 2/5. Functionally, catalyzes the phosphorylation of N-acetylmannosamine (ManNAc) to ManNAc-6-P. This chain is N-acetylmannosamine kinase, found in Haemophilus influenzae (strain PittEE).